Consider the following 452-residue polypeptide: Cytochrome b-c1 complex subunit 2, mitochondrial (452 aa).

Residues 1–14 (MKLLSRAGSFSRFY) constitute a mitochondrion transit peptide. An N6-acetyllysine mark is found at lysine 65, lysine 198, and lysine 249. A Phosphoserine modification is found at serine 367.

It belongs to the peptidase M16 family. UQCRC2/QCR2 subfamily. As to quaternary structure, component of the ubiquinol-cytochrome c oxidoreductase (cytochrome b-c1 complex, complex III, CIII), a multisubunit enzyme composed of 11 subunits. The complex is composed of 3 respiratory subunits cytochrome b, cytochrome c1 and Rieske protein UQCRFS1, 2 core protein subunits UQCRC1/QCR1 and UQCRC2/QCR2, and 6 low-molecular weight protein subunits UQCRH/QCR6, UQCRB/QCR7, UQCRQ/QCR8, UQCR10/QCR9, UQCR11/QCR10 and subunit 9, the cleavage product of Rieske protein UQCRFS1. The complex exists as an obligatory dimer and forms supercomplexes (SCs) in the inner mitochondrial membrane with NADH-ubiquinone oxidoreductase (complex I, CI) and cytochrome c oxidase (complex IV, CIV), resulting in different assemblies (supercomplex SCI(1)III(2)IV(1) and megacomplex MCI(2)III(2)IV(2)). Interacts with RAB5IF. Interacts with STMP1. As to expression, expressed in the head region and flagellum of epididymal sperm.

It localises to the mitochondrion inner membrane. Functionally, component of the ubiquinol-cytochrome c oxidoreductase, a multisubunit transmembrane complex that is part of the mitochondrial electron transport chain which drives oxidative phosphorylation. The respiratory chain contains 3 multisubunit complexes succinate dehydrogenase (complex II, CII), ubiquinol-cytochrome c oxidoreductase (cytochrome b-c1 complex, complex III, CIII) and cytochrome c oxidase (complex IV, CIV), that cooperate to transfer electrons derived from NADH and succinate to molecular oxygen, creating an electrochemical gradient over the inner membrane that drives transmembrane transport and the ATP synthase. The cytochrome b-c1 complex catalyzes electron transfer from ubiquinol to cytochrome c, linking this redox reaction to translocation of protons across the mitochondrial inner membrane, with protons being carried across the membrane as hydrogens on the quinol. In the process called Q cycle, 2 protons are consumed from the matrix, 4 protons are released into the intermembrane space and 2 electrons are passed to cytochrome c. The 2 core subunits UQCRC1/QCR1 and UQCRC2/QCR2 are homologous to the 2 mitochondrial-processing peptidase (MPP) subunits beta-MPP and alpha-MPP respectively, and they seem to have preserved their MPP processing properties. May be involved in the in situ processing of UQCRFS1 into the mature Rieske protein and its mitochondrial targeting sequence (MTS)/subunit 9 when incorporated into complex III. This is Cytochrome b-c1 complex subunit 2, mitochondrial (Uqcrc2) from Rattus norvegicus (Rat).